Consider the following 28-residue polypeptide: uncharacterized protein (28 aa).

Residues 5 to 27 (SAFHACNIIFLPLVKCASATIML) form a helical membrane-spanning segment.

It is found in the membrane. This is an uncharacterized protein from Saccharomyces cerevisiae (strain ATCC 204508 / S288c) (Baker's yeast).